Reading from the N-terminus, the 487-residue chain is N-succinylglutamate 5-semialdehyde dehydrogenase (487 aa).

NAD(+) is bound at residue 221-226 (GSSDTG). Catalysis depends on residues Glu-244 and Cys-278.

This sequence belongs to the aldehyde dehydrogenase family. AstD subfamily.

It catalyses the reaction N-succinyl-L-glutamate 5-semialdehyde + NAD(+) + H2O = N-succinyl-L-glutamate + NADH + 2 H(+). The protein operates within amino-acid degradation; L-arginine degradation via AST pathway; L-glutamate and succinate from L-arginine: step 4/5. In terms of biological role, catalyzes the NAD-dependent reduction of succinylglutamate semialdehyde into succinylglutamate. This is N-succinylglutamate 5-semialdehyde dehydrogenase from Burkholderia mallei (strain ATCC 23344).